A 102-amino-acid polypeptide reads, in one-letter code: Small ribosomal subunit protein uS17 (102 aa).

Positions methionine 1–arginine 27 are disordered.

It belongs to the universal ribosomal protein uS17 family. As to quaternary structure, part of the 30S ribosomal subunit.

Functionally, one of the primary rRNA binding proteins, it binds specifically to the 5'-end of 16S ribosomal RNA. This Salinibacter ruber (strain DSM 13855 / M31) protein is Small ribosomal subunit protein uS17.